A 407-amino-acid chain; its full sequence is BTB/POZ and MATH domain-containing protein 1 (407 aa).

One can recognise an MATH domain in the interval 33 to 167 (NGFHEFKICG…ENSLLVRCRV (135 aa)). The region spanning 203–270 (CDVVFQVDGE…IYWDELPDMQ (68 aa)) is the BTB domain.

Belongs to the Tdpoz family. As to quaternary structure, homodimer or heterodimer with BPM3, BPM5 and BPM6. Interacts with CUL3A and CUL3B. Interacts with RAP2-4 and RAP2-13. Binds to MYB56 at the promoter of FLOWERING LOCUS T (FT). In terms of tissue distribution, ubiquitous.

The protein localises to the nucleus. Its pathway is protein modification; protein ubiquitination. In terms of biological role, may act as a substrate-specific adapter of an E3 ubiquitin-protein ligase complex (CUL3-RBX1-BTB) which mediates the ubiquitination and subsequent proteasomal degradation of target proteins. The chain is BTB/POZ and MATH domain-containing protein 1 (BPM1) from Arabidopsis thaliana (Mouse-ear cress).